Here is a 1136-residue protein sequence, read N- to C-terminus: Receptor-type guanylate cyclase gcy-4 (1136 aa).

Positions 1-21 (MRQLNYYIFISTILTYNLTHG) are cleaved as a signal peptide. Residues 22 to 485 (QGPRPVIRVG…CPLPIFEQYR (464 aa)) are Extracellular-facing. 7 N-linked (GlcNAc...) asparagine glycosylation sites follow: Asn40, Asn194, Asn252, Asn351, Asn377, Asn386, and Asn438. A helical membrane pass occupies residues 486 to 506 (ALVIVAIAVTILILLAIIICM). Residues 507–1136 (SSKIRNRRVE…LRREMMRVEV (630 aa)) lie on the Cytoplasmic side of the membrane. One can recognise a Protein kinase domain in the interval 533-833 (LPMHRRASKS…EDNLMDHVFS (301 aa)). A disordered region spans residues 536–565 (HRRASKSSQESETESASETENFTSKSGDTM). In terms of domain architecture, Guanylate cyclase spans 891–1021 (TVFFSDLVKF…DTVNTASRME (131 aa)).

This sequence belongs to the adenylyl cyclase class-4/guanylyl cyclase family. In terms of tissue distribution, expression is biased toward ASE right (ASER) sensory neuron.

Its subcellular location is the cell membrane. It carries out the reaction GTP = 3',5'-cyclic GMP + diphosphate. Functionally, guanylate cyclase involved in the production of the second messenger cGMP. Regulates chemotaxis responses toward Br(1-) and I(1-) salt ions in ASE right (ASER) sensory neuron. The sequence is that of Receptor-type guanylate cyclase gcy-4 from Caenorhabditis elegans.